The sequence spans 261 residues: Sepiapterin reductase (261 aa).

Residues G16–G22, R44–T45, and D71–L72 contribute to the NADP(+) site. Substrate is bound by residues S158–L159 and Y171. K175 serves as a coordination point for NADP(+). G200 serves as a coordination point for substrate. L202–H207 serves as a coordination point for NADP(+). D258 is a substrate binding site.

Belongs to the sepiapterin reductase family. In terms of assembly, homodimer.

The protein localises to the cytoplasm. The catalysed reaction is L-erythro-7,8-dihydrobiopterin + NADP(+) = L-sepiapterin + NADPH + H(+). It carries out the reaction (6R)-L-erythro-5,6,7,8-tetrahydrobiopterin + 2 NADP(+) = 6-pyruvoyl-5,6,7,8-tetrahydropterin + 2 NADPH + 2 H(+). Its function is as follows. Catalyzes the final one or two reductions in tetra-hydrobiopterin biosynthesis to form 5,6,7,8-tetrahydrobiopterin. This Xenopus tropicalis (Western clawed frog) protein is Sepiapterin reductase (spr).